Consider the following 420-residue polypeptide: Gamma-glutamyl phosphate reductase (420 aa).

This sequence belongs to the gamma-glutamyl phosphate reductase family.

The protein localises to the cytoplasm. The catalysed reaction is L-glutamate 5-semialdehyde + phosphate + NADP(+) = L-glutamyl 5-phosphate + NADPH + H(+). The protein operates within amino-acid biosynthesis; L-proline biosynthesis; L-glutamate 5-semialdehyde from L-glutamate: step 2/2. In terms of biological role, catalyzes the NADPH-dependent reduction of L-glutamate 5-phosphate into L-glutamate 5-semialdehyde and phosphate. The product spontaneously undergoes cyclization to form 1-pyrroline-5-carboxylate. This Alkalilimnicola ehrlichii (strain ATCC BAA-1101 / DSM 17681 / MLHE-1) protein is Gamma-glutamyl phosphate reductase.